A 470-amino-acid chain; its full sequence is Histidine--tRNA ligase (470 aa).

The segment at 69-99 (GIDPILPPNRQAEKDKSGETGKDKSGETGSE) is disordered. The span at 79–94 (QAEKDKSGETGKDKSG) shows a compositional bias: basic and acidic residues.

This sequence belongs to the class-II aminoacyl-tRNA synthetase family. Homodimer.

The protein localises to the cytoplasm. It catalyses the reaction tRNA(His) + L-histidine + ATP = L-histidyl-tRNA(His) + AMP + diphosphate + H(+). The polypeptide is Histidine--tRNA ligase (Nostoc punctiforme (strain ATCC 29133 / PCC 73102)).